Consider the following 268-residue polypeptide: Calpain small subunit 1 (268 aa).

N-acetylmethionine is present on methionine 1. Serine 6 bears the Phosphoserine mark. The 35-residue stretch at glutamate 91 to asparagine 125 folds into the EF-hand 1; atypical domain. Alanine 109, aspartate 112, glutamate 114, glutamate 119, aspartate 137, aspartate 152, aspartate 154, threonine 156, lysine 158, and glutamate 163 together coordinate Ca(2+). EF-hand domains follow at residues phenylalanine 139–lysine 172, asparagine 169–histidine 204, leucine 205–leucine 233, and valine 234–serine 268. Position 179 is an N6-acetyllysine (lysine 179). Aspartate 182, aspartate 184, serine 186, threonine 188, glutamate 193, and aspartate 225 together coordinate Ca(2+).

In terms of assembly, homodimer or heterodimer of a large (catalytic) and a small (regulatory) subunit. In presence of calcium, the heterodimer dissociates.

It localises to the cytoplasm. The protein localises to the cell membrane. Functionally, regulatory subunit of the calcium-regulated non-lysosomal thiol-protease which catalyzes limited proteolysis of substrates involved in cytoskeletal remodeling and signal transduction. Essential for embryonic development. The polypeptide is Calpain small subunit 1 (CAPNS1) (Homo sapiens (Human)).